Here is a 225-residue protein sequence, read N- to C-terminus: NAD(P)H-quinone oxidoreductase subunit K, chloroplastic (225 aa).

[4Fe-4S] cluster-binding residues include Cys-43, Cys-44, Cys-108, and Cys-139.

Belongs to the complex I 20 kDa subunit family. In terms of assembly, NDH is composed of at least 16 different subunits, 5 of which are encoded in the nucleus. Requires [4Fe-4S] cluster as cofactor.

Its subcellular location is the plastid. It localises to the chloroplast thylakoid membrane. It carries out the reaction a plastoquinone + NADH + (n+1) H(+)(in) = a plastoquinol + NAD(+) + n H(+)(out). The enzyme catalyses a plastoquinone + NADPH + (n+1) H(+)(in) = a plastoquinol + NADP(+) + n H(+)(out). Its function is as follows. NDH shuttles electrons from NAD(P)H:plastoquinone, via FMN and iron-sulfur (Fe-S) centers, to quinones in the photosynthetic chain and possibly in a chloroplast respiratory chain. The immediate electron acceptor for the enzyme in this species is believed to be plastoquinone. Couples the redox reaction to proton translocation, and thus conserves the redox energy in a proton gradient. This chain is NAD(P)H-quinone oxidoreductase subunit K, chloroplastic, found in Fagopyrum esculentum subsp. ancestrale (Wild buckwheat).